The primary structure comprises 540 residues: NAD(P)H-quinone oxidoreductase subunit 2 B, chloroplastic (540 aa).

The next 13 helical transmembrane spans lie at 24-44 (LLLF…GLIL), 57-77 (IPWL…ALLF), 99-119 (IFQF…VEYI), 124-144 (MAIT…MFLC), 149-169 (FITI…LSGY), 183-203 (YLLM…WLYG), 227-247 (PGIS…LSPA), 325-345 (WHLL…LIAI), 353-373 (MLAY…IVGD), 384-404 (YMLF…LFGL), 425-445 (ALSL…AGFF), 448-468 (LYLF…IGLL), and 514-534 (MIVC…IIAI).

It belongs to the complex I subunit 2 family. NDH is composed of at least 16 different subunits, 5 of which are encoded in the nucleus.

Its subcellular location is the plastid. It is found in the chloroplast thylakoid membrane. It carries out the reaction a plastoquinone + NADH + (n+1) H(+)(in) = a plastoquinol + NAD(+) + n H(+)(out). The catalysed reaction is a plastoquinone + NADPH + (n+1) H(+)(in) = a plastoquinol + NADP(+) + n H(+)(out). Functionally, NDH shuttles electrons from NAD(P)H:plastoquinone, via FMN and iron-sulfur (Fe-S) centers, to quinones in the photosynthetic chain and possibly in a chloroplast respiratory chain. The immediate electron acceptor for the enzyme in this species is believed to be plastoquinone. Couples the redox reaction to proton translocation, and thus conserves the redox energy in a proton gradient. This is NAD(P)H-quinone oxidoreductase subunit 2 B, chloroplastic from Coffea arabica (Arabian coffee).